Here is a 1025-residue protein sequence, read N- to C-terminus: Protein mono-ADP-ribosyltransferase PARP10 (1025 aa).

Residue Thr101 is modified to Phosphothreonine. ADP-ribosyl glutamic acid is present on Glu106. Lys140 is subject to N6-(ADP-ribosyl)lysine. Residues 318–346 are disordered; the sequence is GIMTTGSGQEPGQSGTSLRTGPMGSLGQA. Residues 321–336 show a composition bias toward polar residues; that stretch reads TTGSGQEPGQSGTSLR. A phosphoserine mark is found at Ser378, Ser423, and Ser431. 2 disordered regions span residues 569-589 and 617-644; these read VLPGNAHTLWTPDSTGGDQED and LEEEGPQEQPEEEVTPGHEEEEPVAPST. The span at 617–639 shows a compositional bias: acidic residues; it reads LEEEGPQEQPEEEVTPGHEEEEP. 2 consecutive short sequence motifs (ubiquitin-interacting) follow at residues 650–667 and 673–690; these read LEEEAALQLALHRSLEPQ and QEEAAALRQALTLSLLEQ. Ser663 carries the post-translational modification Phosphoserine. Residues 700-907 form a myc binding region; the sequence is DGGTDGKAQL…CAHGFNRSFC (208 aa). One can recognise a PARP catalytic domain in the interval 806–1025; sequence PTLAGQTLKG…SGLPGRSPDT (220 aa). The short motif at 831 to 838 is the PIP-box element; the sequence is QEVVRAFY. Glu882 is modified (ADP-ribosyl glutamic acid). Position 916 is an N6-(ADP-ribosyl)lysine (Lys916). Lys916 is subject to N6-acetyllysine. The tract at residues 1006–1025 is disordered; sequence HVPRASPDDPSGLPGRSPDT. Ser1011 is subject to Phosphoserine.

Belongs to the ARTD/PARP family. In terms of assembly, interacts with MYC. Interacts with PARP14. Interacts (via-PIP box and ubiquitin-interacting motifs) with PCNA. Post-translationally, stimulated through its phosphorylation by CDK2. Acquires CDK-dependent phosphorylation through late-G1 to S phase, and from prometaphase to cytokinesis in the nucleolar organizing regions. Phosphorylation is suppressed in growth-arrested cells. Auto-mono-ADP-ribosylated on glutamate and lysine residues. As to expression, highly expressed in spleen and thymus. Intermediate levels in liver, kidney, pancreas, prostate, testis, ovary, intestine, and leukocytes. Low expression in heart, brain, placenta, lung, skeletal muscle, and colon.

The protein resides in the nucleus. It localises to the nucleolus. Its subcellular location is the cytoplasm. The enzyme catalyses L-lysyl-[protein] + NAD(+) = N(6)-(ADP-D-ribosyl)-L-lysyl-[protein] + nicotinamide + H(+). The catalysed reaction is L-aspartyl-[protein] + NAD(+) = 4-O-(ADP-D-ribosyl)-L-aspartyl-[protein] + nicotinamide. It carries out the reaction L-glutamyl-[protein] + NAD(+) = 5-O-(ADP-D-ribosyl)-L-glutamyl-[protein] + nicotinamide. In terms of biological role, ADP-ribosyltransferase that mediates mono-ADP-ribosylation of glutamate and aspartate residues on target proteins. In contrast to PARP1 and PARP2, it is not able to mediate poly-ADP-ribosylation. Catalyzes mono-ADP-ribosylation of GSK3B, leading to negatively regulate GSK3B kinase activity. Involved in translesion DNA synthesis in response to DNA damage via its interaction with PCNA. The sequence is that of Protein mono-ADP-ribosyltransferase PARP10 from Homo sapiens (Human).